The chain runs to 186 residues: UPF0149 protein Pfl01_5435 (186 aa).

It belongs to the UPF0149 family.

The polypeptide is UPF0149 protein Pfl01_5435 (Pseudomonas fluorescens (strain Pf0-1)).